The chain runs to 322 residues: Probable ethanolamine-phosphate cytidylyltransferase (322 aa).

It belongs to the cytidylyltransferase family.

The catalysed reaction is phosphoethanolamine + CTP + H(+) = CDP-ethanolamine + diphosphate. The protein operates within phospholipid metabolism; phosphatidylethanolamine biosynthesis; phosphatidylethanolamine from ethanolamine: step 2/3. The sequence is that of Probable ethanolamine-phosphate cytidylyltransferase (MUQ1) from Encephalitozoon cuniculi (strain GB-M1) (Microsporidian parasite).